We begin with the raw amino-acid sequence, 331 residues long: (+)-aristolochene synthase TS1 (331 aa).

Positions 1 to 22 (MTRMKNSSSNVTSASGSGSGSG) are disordered. Positions 7–16 (SSSNVTSASG) are enriched in low complexity. 4 residues coordinate Mg(2+): aspartate 102, asparagine 231, serine 235, and glutamate 239. The DDxx(x)D/E motif signature appears at 102 to 106 (DDLLE). The NDxxSxxxD/E motif motif lies at 231-239 (NDVYSYEKE). Residues arginine 326 and tyrosine 327 each contribute to the (2E,6E)-farnesyl diphosphate site.

The protein belongs to the terpene synthase family. As to quaternary structure, homodimer. The cofactor is Mg(2+).

It carries out the reaction (2E,6E)-farnesyl diphosphate = (+)-aristolochene + diphosphate. It functions in the pathway sesquiterpene biosynthesis; aristolochene biosynthesis; aristolochene from farnesyl diphosphate: step 1/1. Functionally, catalyzes the cyclization of trans,trans-farnesyl diphosphate (FPP) to the bicyclic sesquiterpene aristolochene. Aristolochene is the likely parent compound for a number of sesquiterpenoid toxins produced by filamentous fungi. The sequence is that of (+)-aristolochene synthase TS1 from Penicillium expansum (Blue mold rot fungus).